A 333-amino-acid polypeptide reads, in one-letter code: Endo-1,4-beta-xylanase (333 aa).

The N-terminal stretch at 1-17 (MYLVAFMLLAILPTGYC) is a signal peptide. The region spanning 18–330 (QLNTLAVRAG…KPAYQGIVDG (313 aa)) is the GH10 domain. Glu147 (proton donor) is an active-site residue. The active-site Nucleophile is the Glu252.

The protein belongs to the glycosyl hydrolase 10 (cellulase F) family.

The protein localises to the secreted. The enzyme catalyses Endohydrolysis of (1-&gt;4)-beta-D-xylosidic linkages in xylans.. The protein operates within glycan degradation; xylan degradation. Functionally, has xylanase activity. Seems to be involved in the release of sugars from the hemicellulolytic fraction in the compost. This is Endo-1,4-beta-xylanase (xlnA) from Agaricus bisporus (White button mushroom).